A 345-amino-acid polypeptide reads, in one-letter code: Phosphoribosylformylglycinamidine cyclo-ligase (345 aa).

The protein belongs to the AIR synthase family.

It is found in the cytoplasm. It carries out the reaction 2-formamido-N(1)-(5-O-phospho-beta-D-ribosyl)acetamidine + ATP = 5-amino-1-(5-phospho-beta-D-ribosyl)imidazole + ADP + phosphate + H(+). It participates in purine metabolism; IMP biosynthesis via de novo pathway; 5-amino-1-(5-phospho-D-ribosyl)imidazole from N(2)-formyl-N(1)-(5-phospho-D-ribosyl)glycinamide: step 2/2. The polypeptide is Phosphoribosylformylglycinamidine cyclo-ligase (Escherichia coli (strain SE11)).